The following is a 340-amino-acid chain: 3-isopropylmalate dehydrogenase (340 aa).

Substrate contacts are provided by Arg-88, Arg-98, Arg-122, and Asp-212. Mg(2+)-binding residues include Asp-212, Asp-236, and Asp-240. NAD(+) is bound at residue 272-284 (GSAPDIMGKGIAD).

The protein belongs to the isocitrate and isopropylmalate dehydrogenases family. LeuB type 2 subfamily. In terms of assembly, homodimer. Requires Mg(2+) as cofactor. The cofactor is Mn(2+).

Its subcellular location is the cytoplasm. It carries out the reaction (2R,3S)-3-isopropylmalate + NAD(+) = 4-methyl-2-oxopentanoate + CO2 + NADH. It functions in the pathway amino-acid biosynthesis; L-leucine biosynthesis; L-leucine from 3-methyl-2-oxobutanoate: step 3/4. Functionally, catalyzes the oxidation of 3-carboxy-2-hydroxy-4-methylpentanoate (3-isopropylmalate) to 3-carboxy-4-methyl-2-oxopentanoate. The product decarboxylates to 4-methyl-2 oxopentanoate. This Corynebacterium efficiens (strain DSM 44549 / YS-314 / AJ 12310 / JCM 11189 / NBRC 100395) protein is 3-isopropylmalate dehydrogenase.